Consider the following 88-residue polypeptide: Putative membrane protein insertion efficiency factor (88 aa).

Belongs to the UPF0161 family.

The protein resides in the cell inner membrane. Functionally, could be involved in insertion of integral membrane proteins into the membrane. The protein is Putative membrane protein insertion efficiency factor of Burkholderia vietnamiensis (strain G4 / LMG 22486) (Burkholderia cepacia (strain R1808)).